A 392-amino-acid polypeptide reads, in one-letter code: Fasciculation and elongation protein zeta-1 (392 aa).

Residues 1-37 (MEAPLVSLDEEFEDLRPSCSEDPEEKPQCFYGSSPHH) are disordered. At Ser58 the chain carries Phosphoserine. The disordered stretch occupies residues 175-198 (MQNSPDPEEEEEVLEEEDGGETSS). Positions 180–194 (DPEEEEEVLEEEDGG) are enriched in acidic residues. Positions 230 to 298 (SELTELLDQV…KKRRKEKGLS (69 aa)) form a coiled coil. Phosphoserine is present on residues Ser298 and Ser316.

The protein belongs to the zygin family. As to quaternary structure, homodimer; disulfide-linked. May form heterodimers with FEZ2. Interacts with the NH2-terminal variable region (V1) of PKC zeta and weakly with that of PKC epsilon. Interacts with UBE4B. Interacts with SAP30L. Interacts with SCOC and ULK1; SCOC interferes with ULK1-binding to FEZ1. Directly interacts with SCOC and UVRAG. Stabilizes the interaction between SCOC and UVRAG during amino acid starvation. Post-translationally, phosphorylated by protein kinase C zeta; which enhances interaction with UBE4B and polyubiquitination. Polyubiquitinated in a UBE4B-dependent manner; which does not lead to proteasomal degradation and may be important for neurogenic activity. Polyubiquitin linkage seems to be mainly through Lys-26. As to expression, mainly expressed in brain.

The protein resides in the cytoplasm. The protein localises to the cytoskeleton. It is found in the microtubule organizing center. It localises to the centrosome. Its subcellular location is the cell membrane. In terms of biological role, may be involved in axonal outgrowth as component of the network of molecules that regulate cellular morphology and axon guidance machinery. Able to restore partial locomotion and axonal fasciculation to C.elegans unc-76 mutants in germline transformation experiments. May participate in the transport of mitochondria and other cargos along microtubules. The chain is Fasciculation and elongation protein zeta-1 (FEZ1) from Homo sapiens (Human).